The sequence spans 88 residues: MGTIATNPEGITNPPIDELLEKTTSKYALVIFAAKRARQVNAYYSQLGEGLLEYVGPLVETTPQEKPLSIAMREINGGLLTAEPTDQP.

It belongs to the RNA polymerase subunit omega family. The RNAP catalytic core consists of 2 alpha, 1 beta, 1 beta' and 1 omega subunit. When a sigma factor is associated with the core the holoenzyme is formed, which can initiate transcription.

It carries out the reaction RNA(n) + a ribonucleoside 5'-triphosphate = RNA(n+1) + diphosphate. Functionally, promotes RNA polymerase assembly. Latches the N- and C-terminal regions of the beta' subunit thereby facilitating its interaction with the beta and alpha subunits. This Salinispora arenicola (strain CNS-205) protein is DNA-directed RNA polymerase subunit omega.